A 229-amino-acid chain; its full sequence is Large ribosomal subunit protein uL1 (229 aa).

Belongs to the universal ribosomal protein uL1 family. In terms of assembly, part of the 50S ribosomal subunit.

Its function is as follows. Binds directly to 23S rRNA. The L1 stalk is quite mobile in the ribosome, and is involved in E site tRNA release. Functionally, protein L1 is also a translational repressor protein, it controls the translation of the L11 operon by binding to its mRNA. This is Large ribosomal subunit protein uL1 from Caulobacter sp. (strain K31).